Consider the following 289-residue polypeptide: Cell division protein ZipA (289 aa).

A topological domain (periplasmic) is located at residue methionine 1. The chain crosses the membrane as a helical span at residues 2 to 22 (DIGLREWLIVIGLIVIAGILF). Topologically, residues 23–289 (DGWRRMRGGK…HERRSLMQKR (267 aa)) are cytoplasmic. A disordered region spans residues 66–141 (REPSFDEQDL…KEREKAPAVA (76 aa)). Residues 81–99 (REAKERKGGKRQEEPRQGD) are compositionally biased toward basic and acidic residues. The span at 100 to 114 (LDLDEGLALEADPSD) shows a compositional bias: acidic residues.

The protein belongs to the ZipA family. In terms of assembly, interacts with FtsZ via their C-terminal domains.

The protein localises to the cell inner membrane. Its function is as follows. Essential cell division protein that stabilizes the FtsZ protofilaments by cross-linking them and that serves as a cytoplasmic membrane anchor for the Z ring. Also required for the recruitment to the septal ring of downstream cell division proteins. This Pseudomonas aeruginosa (strain LESB58) protein is Cell division protein ZipA.